An 85-amino-acid chain; its full sequence is Small ribosomal subunit protein bS16 (85 aa).

The protein belongs to the bacterial ribosomal protein bS16 family.

This chain is Small ribosomal subunit protein bS16, found in Metamycoplasma arthritidis (strain 158L3-1) (Mycoplasma arthritidis).